The primary structure comprises 314 residues: Secreted frizzled-related protein 1 (314 aa).

The signal sequence occupies residues 1 to 31 (MGVGRSEGGRRGAALGVLLALGVALLAVGSA). One can recognise an FZ domain in the interval 53–169 (TKPHQCVAIP…FPQDYVCIAM (117 aa)). 5 disulfides stabilise this stretch: Cys-58/Cys-121, Cys-68/Cys-114, Cys-105/Cys-140, Cys-129/Cys-166, and Cys-133/Cys-157. N-linked (GlcNAc...) asparagine glycosylation occurs at Asn-173. 3 disulfide bridges follow: Cys-186-Cys-256, Cys-189-Cys-258, and Cys-203-Cys-306. Positions 186–306 (CPPCDNEMKS…FMKKVKAPDC (121 aa)) constitute an NTR domain.

This sequence belongs to the secreted frizzled-related protein (sFRP) family.

The protein resides in the secreted. Soluble frizzled-related proteins (sFRPS) function as modulators of Wnt signaling through direct interaction with Wnts. They have a role in regulating cell growth and differentiation in specific cell types. This is Secreted frizzled-related protein 1 (SFRP1) from Gallus gallus (Chicken).